The primary structure comprises 351 residues: Ferrochelatase (351 aa).

Fe cation is bound by residues histidine 184 and glutamate 265.

The protein belongs to the ferrochelatase family.

Its subcellular location is the cytoplasm. It carries out the reaction heme b + 2 H(+) = protoporphyrin IX + Fe(2+). Its pathway is porphyrin-containing compound metabolism; protoheme biosynthesis; protoheme from protoporphyrin-IX: step 1/1. In terms of biological role, catalyzes the ferrous insertion into protoporphyrin IX. This chain is Ferrochelatase, found in Rhodopirellula baltica (strain DSM 10527 / NCIMB 13988 / SH1).